The following is a 338-amino-acid chain: Aspartate carbamoyltransferase catalytic subunit (338 aa).

Positions 59 and 60 each coordinate carbamoyl phosphate. Lysine 87 is an L-aspartate binding site. Carbamoyl phosphate contacts are provided by arginine 109, histidine 142, and glutamine 145. L-aspartate is bound by residues arginine 182 and arginine 253. Glycine 294 and proline 295 together coordinate carbamoyl phosphate.

This sequence belongs to the aspartate/ornithine carbamoyltransferase superfamily. ATCase family. As to quaternary structure, heterododecamer (2C3:3R2) of six catalytic PyrB chains organized as two trimers (C3), and six regulatory PyrI chains organized as three dimers (R2).

It carries out the reaction carbamoyl phosphate + L-aspartate = N-carbamoyl-L-aspartate + phosphate + H(+). It participates in pyrimidine metabolism; UMP biosynthesis via de novo pathway; (S)-dihydroorotate from bicarbonate: step 2/3. Catalyzes the condensation of carbamoyl phosphate and aspartate to form carbamoyl aspartate and inorganic phosphate, the committed step in the de novo pyrimidine nucleotide biosynthesis pathway. The polypeptide is Aspartate carbamoyltransferase catalytic subunit (Prochlorococcus marinus (strain MIT 9301)).